The primary structure comprises 512 residues: Histidine ammonia-lyase (512 aa).

The 5-imidazolinone (Ala-Gly) cross-link spans 141–143 (ASG). At S142 the chain carries 2,3-didehydroalanine (Ser).

It belongs to the PAL/histidase family. Contains an active site 4-methylidene-imidazol-5-one (MIO), which is formed autocatalytically by cyclization and dehydration of residues Ala-Ser-Gly.

The protein resides in the cytoplasm. It carries out the reaction L-histidine = trans-urocanate + NH4(+). It participates in amino-acid degradation; L-histidine degradation into L-glutamate; N-formimidoyl-L-glutamate from L-histidine: step 1/3. This chain is Histidine ammonia-lyase, found in Bacillus velezensis (strain DSM 23117 / BGSC 10A6 / LMG 26770 / FZB42) (Bacillus amyloliquefaciens subsp. plantarum).